We begin with the raw amino-acid sequence, 110 residues long: UPF0060 membrane protein PFL_4337 (110 aa).

The next 4 helical transmembrane spans lie at 5–25 (LWFF…WMWL), 31–51 (ALWV…LTKV), 59–79 (AYAA…AVVE), and 84–104 (LGSD…ILFG).

It belongs to the UPF0060 family.

The protein localises to the cell inner membrane. The polypeptide is UPF0060 membrane protein PFL_4337 (Pseudomonas fluorescens (strain ATCC BAA-477 / NRRL B-23932 / Pf-5)).